We begin with the raw amino-acid sequence, 292 residues long: ATP phosphoribosyltransferase (292 aa).

It belongs to the ATP phosphoribosyltransferase family. Long subfamily. It depends on Mg(2+) as a cofactor.

Its subcellular location is the cytoplasm. It catalyses the reaction 1-(5-phospho-beta-D-ribosyl)-ATP + diphosphate = 5-phospho-alpha-D-ribose 1-diphosphate + ATP. The protein operates within amino-acid biosynthesis; L-histidine biosynthesis; L-histidine from 5-phospho-alpha-D-ribose 1-diphosphate: step 1/9. Its activity is regulated as follows. Feedback inhibited by histidine. Its function is as follows. Catalyzes the condensation of ATP and 5-phosphoribose 1-diphosphate to form N'-(5'-phosphoribosyl)-ATP (PR-ATP). Has a crucial role in the pathway because the rate of histidine biosynthesis seems to be controlled primarily by regulation of HisG enzymatic activity. The sequence is that of ATP phosphoribosyltransferase from Gemmatimonas aurantiaca (strain DSM 14586 / JCM 11422 / NBRC 100505 / T-27).